A 78-amino-acid polypeptide reads, in one-letter code: Large ribosomal subunit protein bL28 (78 aa).

The protein belongs to the bacterial ribosomal protein bL28 family.

This is Large ribosomal subunit protein bL28 from Klebsiella pneumoniae (strain 342).